The following is a 337-amino-acid chain: Ketol-acid reductoisomerase (NADP(+)) (337 aa).

Positions 3-183 (VEMFYDDDAD…GGARAGVIKT (181 aa)) constitute a KARI N-terminal Rossmann domain. NADP(+) is bound by residues 26–29 (YGSQ), lysine 49, serine 52, serine 54, and 84–87 (DTAQ). Histidine 109 is a catalytic residue. Glycine 135 contributes to the NADP(+) binding site. Residues 184–329 (TFKEETETDL…KKLRDLMSWV (146 aa)) form the KARI C-terminal knotted domain. Mg(2+)-binding residues include aspartate 192, glutamate 196, glutamate 228, and glutamate 232. Serine 253 is a binding site for substrate.

It belongs to the ketol-acid reductoisomerase family. Requires Mg(2+) as cofactor.

It catalyses the reaction (2R)-2,3-dihydroxy-3-methylbutanoate + NADP(+) = (2S)-2-acetolactate + NADPH + H(+). The catalysed reaction is (2R,3R)-2,3-dihydroxy-3-methylpentanoate + NADP(+) = (S)-2-ethyl-2-hydroxy-3-oxobutanoate + NADPH + H(+). It functions in the pathway amino-acid biosynthesis; L-isoleucine biosynthesis; L-isoleucine from 2-oxobutanoate: step 2/4. It participates in amino-acid biosynthesis; L-valine biosynthesis; L-valine from pyruvate: step 2/4. Functionally, involved in the biosynthesis of branched-chain amino acids (BCAA). Catalyzes an alkyl-migration followed by a ketol-acid reduction of (S)-2-acetolactate (S2AL) to yield (R)-2,3-dihydroxy-isovalerate. In the isomerase reaction, S2AL is rearranged via a Mg-dependent methyl migration to produce 3-hydroxy-3-methyl-2-ketobutyrate (HMKB). In the reductase reaction, this 2-ketoacid undergoes a metal-dependent reduction by NADPH to yield (R)-2,3-dihydroxy-isovalerate. In Mycobacterium sp. (strain JLS), this protein is Ketol-acid reductoisomerase (NADP(+)).